A 179-amino-acid chain; its full sequence is Large ribosomal subunit protein uL5 (179 aa).

It belongs to the universal ribosomal protein uL5 family. Part of the 50S ribosomal subunit; part of the 5S rRNA/L5/L18/L25 subcomplex. Contacts the 5S rRNA and the P site tRNA. Forms a bridge to the 30S subunit in the 70S ribosome.

In terms of biological role, this is one of the proteins that bind and probably mediate the attachment of the 5S RNA into the large ribosomal subunit, where it forms part of the central protuberance. In the 70S ribosome it contacts protein S13 of the 30S subunit (bridge B1b), connecting the 2 subunits; this bridge is implicated in subunit movement. Contacts the P site tRNA; the 5S rRNA and some of its associated proteins might help stabilize positioning of ribosome-bound tRNAs. The polypeptide is Large ribosomal subunit protein uL5 (Actinobacillus pleuropneumoniae serotype 5b (strain L20)).